Reading from the N-terminus, the 496-residue chain is Transmembrane transporter swnT (496 aa).

5 helical membrane-spanning segments follow: residues L40 to L60, V72 to E92, A124 to L144, W162 to E182, and A191 to A211. N225 carries an N-linked (GlcNAc...) asparagine glycan. Helical transmembrane passes span L270–V290, A314–I334, P368–A388, L396–L416, G434–F454, and Y467–A487.

Belongs to the amino acid-polyamine-organocation (APC) superfamily. Amino acid/choline transporter (ACT) (TC 2.A.3.4) family.

It localises to the membrane. Its function is as follows. Transmembrane transporter; part of the gene cluster that mediates the biosynthesis of swainsonine, a cytotoxic fungal alkaloid and a potential cancer therapy drug. Does not mediate the secretion of SW and the exact role of swnT in SW biosynthesis remains to be determined. This Metarhizium robertsii (strain ARSEF 23 / ATCC MYA-3075) (Metarhizium anisopliae (strain ARSEF 23)) protein is Transmembrane transporter swnT.